A 540-amino-acid chain; its full sequence is NADH-ubiquinone oxidoreductase chain 4 (540 aa).

14 consecutive transmembrane segments (helical) span residues 2–22 (TIIA…GVIL), 35–55 (IFIL…LIGC), 89–109 (ISAI…LISI), 118–138 (QKFQ…FAAT), 140–160 (LVQL…MIGV), 172–192 (FQIL…IGIL), 218–238 (LIFI…PLHL), 248–268 (PTAG…YGYI), 282–302 (YFPI…IATL), 310–330 (IVAY…FSGV), 338–358 (IILM…IGVI), 376–396 (VMPI…AFPI), 415–435 (IIIA…SFWL), and 501–521 (VNIF…IIGM).

Belongs to the complex I subunit 4 family.

The protein localises to the mitochondrion membrane. It carries out the reaction a ubiquinone + NADH + 5 H(+)(in) = a ubiquinol + NAD(+) + 4 H(+)(out). Its function is as follows. Core subunit of the mitochondrial membrane respiratory chain NADH dehydrogenase (Complex I) that is believed to belong to the minimal assembly required for catalysis. Complex I functions in the transfer of electrons from NADH to the respiratory chain. The immediate electron acceptor for the enzyme is believed to be ubiquinone. In Dictyostelium discoideum (Social amoeba), this protein is NADH-ubiquinone oxidoreductase chain 4 (nad4).